Here is a 503-residue protein sequence, read N- to C-terminus: Maturase K (503 aa).

Belongs to the intron maturase 2 family. MatK subfamily.

The protein localises to the plastid. The protein resides in the chloroplast. Its function is as follows. Usually encoded in the trnK tRNA gene intron. Probably assists in splicing its own and other chloroplast group II introns. This is Maturase K from Panax quinquefolius (American ginseng).